Here is a 1048-residue protein sequence, read N- to C-terminus: [F-actin]-monooxygenase MICAL1 (1048 aa).

The tract at residues 1-489 (MASPASTNPA…QDLYDMMDKE (489 aa)) is monooxygenase domain. Residues C95, 114-116 (EKR), 121-123 (RHN), F181, Y293, and D393 each bind FAD. T475 is subject to Phosphothreonine. Over residues 488–502 (KEHAQRKSDEPDSRK) the composition is skewed to basic and acidic residues. Residues 488–508 (KEHAQRKSDEPDSRKTTTGSA) are disordered. The 105-residue stretch at 507 to 611 (SAGTEELLHW…YLSHFHSAFK (105 aa)) folds into the Calponin-homology (CH) domain. S616 bears the Phosphoserine mark. A disordered region spans residues 643–676 (TRAKVDEETPSTEEPPVSEPSMSPNTPELSEHQE). The segment covering 654–666 (TEEPPVSEPSMSP) has biased composition (low complexity). Residues 681 to 743 (ELCELCGKHL…LQHLPQEDQK (63 aa)) enclose the LIM zinc-binding domain. 8 residues coordinate Zn(2+): C683, C686, H704, C707, C710, C713, C733, and H736. Disordered stretches follow at residues 741–787 (DQKE…QPAR), 805–825 (IIPD…SDLA), and 839–873 (PVQA…PPLE). Residues 747 to 765 (NNGSLESQELPTPGDSNMQ) show a composition bias toward polar residues. A compositionally biased stretch (low complexity) spans 772–787 (PVTRVSPVPSPSQPAR). S777 and S781 each carry phosphoserine. 3 coiled-coil regions span residues 847 to 867 (EAIE…EEEE), 906 to 949 (EEEM…ESSS), and 974 to 1031 (EEAE…VNQR). The segment covering 852–868 (GDDEEEEEEEEEEEEEP) has biased composition (acidic residues). Positions 905–1048 (KEEEMKRFCK…EERRLREMPA (144 aa)) constitute a bMERB domain.

This sequence belongs to the Mical family. Associates with the SH3 domain of NEDD9. Interacts with VIM and PLXNA3. Interacts with RAB1B, RAB8A, RAB10, RAB13 and RAB15 (in their GTP-bound forms); binding to RAB1B is of low affinity compared to other Rab proteins; at least in case of RAB8A and RAB10 can bind 2 molecules of the Rab proteins simultaneously. Interacts with STK38 and STK38L. Interacts with GRAF1/ARHGAP26, GRAF2/ARHGAP10, RAB8A, RAB8B and RAB10; may bind simultaneously to GRAFs and Rabs and connects GRAFs to Rabs. Does not interact with RAB1 and RAB11A. FAD serves as cofactor. In terms of tissue distribution, expressed in the postnatal and adult hippocampus; found in dentate gyrus, the polymorphic layer, cornu ammonis (CA) 1-3 and in mossy fibers of the striatum lucidum. In adult hippocampus strongly expressed in CA3 pyramidial neurons.

It localises to the cytoplasm. It is found in the cytoskeleton. The protein resides in the endosome membrane. The protein localises to the midbody. The catalysed reaction is L-methionyl-[F-actin] + NADPH + O2 + H(+) = L-methionyl-(R)-S-oxide-[F-actin] + NADP(+) + H2O. It catalyses the reaction NADPH + O2 + H(+) = H2O2 + NADP(+). Monooxygenase that promotes depolymerization of F-actin by mediating oxidation of specific methionine residues on actin to form methionine-sulfoxide, resulting in actin filament disassembly and preventing repolymerization. In the absence of actin, it also functions as a NADPH oxidase producing H(2)O(2). Acts as a cytoskeletal regulator that connects NEDD9 to intermediate filaments. Also acts as a negative regulator of apoptosis via its interaction with STK38 and STK38L; acts by antagonizing STK38 and STK38L activation by MST1/STK4. Involved in regulation of lamina-specific connectivity in the nervous system such as the development of lamina-restricted hippocampal connections. Through redox regulation of the actin cytoskeleton controls the intracellular distribution of secretory vesicles containing L1/neurofascin/NgCAM family proteins in neurons, thereby regulating their cell surface levels. May act as Rab effector protein and play a role in vesicle trafficking. Promotes endosomal tubule extension by associating with RAB8 (RAB8A or RAB8B), RAB10 and GRAF (GRAF1/ARHGAP26 or GRAF2/ARHGAP10) on the endosomal membrane which may connect GRAFs to Rabs, thereby participating in neosynthesized Rab8-Rab10-Rab11-dependent protein export. This chain is [F-actin]-monooxygenase MICAL1 (Mical1), found in Mus musculus (Mouse).